Here is a 495-residue protein sequence, read N- to C-terminus: uncharacterized protein (495 aa).

12 consecutive transmembrane segments (helical) span residues 43-63 (IIIS…MPSI), 75-95 (TLVV…PLIF), 106-126 (PLNI…ALSV), 128-148 (LAMF…GLGI), 168-188 (IYFL…GFIA), 196-216 (WEFW…VVFL), 284-304 (PIMI…YLLF), 323-343 (GLTY…LLPL), 366-386 (PMAF…GWTV), 390-410 (VFWF…VMTF), 426-446 (ASAM…FPLF), and 461-481 (SLLA…YMFG).

It belongs to the major facilitator superfamily. CAR1 family.

Its subcellular location is the membrane. This is an uncharacterized protein from Schizosaccharomyces pombe (strain 972 / ATCC 24843) (Fission yeast).